The following is a 357-amino-acid chain: Geranylgeranyl pyrophosphate synthase 11, chloroplastic (357 aa).

A chloroplast-targeting transit peptide spans 1–37 (MATTLSSSSLFIQFRGRRYNSLSSFNNLQKRTVLSLS). Isopentenyl diphosphate is bound by residues Lys103, Arg106, and His135. 2 residues coordinate Mg(2+): Asp142 and Asp148. Arg153 provides a ligand contact to dimethylallyl diphosphate. Arg154 provides a ligand contact to isopentenyl diphosphate. Residues Lys242, Thr243, Gln280, Lys297, and Lys307 each contribute to the dimethylallyl diphosphate site.

It belongs to the FPP/GGPP synthase family. As to quaternary structure, monomer. The cofactor is Mg(2+).

It is found in the plastid. The protein resides in the chloroplast. It catalyses the reaction isopentenyl diphosphate + dimethylallyl diphosphate = (2E)-geranyl diphosphate + diphosphate. The catalysed reaction is isopentenyl diphosphate + (2E)-geranyl diphosphate = (2E,6E)-farnesyl diphosphate + diphosphate. The enzyme catalyses isopentenyl diphosphate + (2E,6E)-farnesyl diphosphate = (2E,6E,10E)-geranylgeranyl diphosphate + diphosphate. The protein operates within isoprenoid biosynthesis; farnesyl diphosphate biosynthesis; farnesyl diphosphate from geranyl diphosphate and isopentenyl diphosphate: step 1/1. It participates in isoprenoid biosynthesis; geranyl diphosphate biosynthesis; geranyl diphosphate from dimethylallyl diphosphate and isopentenyl diphosphate: step 1/1. Its pathway is isoprenoid biosynthesis; geranylgeranyl diphosphate biosynthesis; geranylgeranyl diphosphate from farnesyl diphosphate and isopentenyl diphosphate: step 1/1. Its function is as follows. Catalyzes the trans-addition of the three molecules of IPP onto DMAPP to form geranylgeranyl pyrophosphate. The protein is Geranylgeranyl pyrophosphate synthase 11, chloroplastic of Arabidopsis thaliana (Mouse-ear cress).